The following is a 514-amino-acid chain: MSFRINTNIAALTSHAVGVQNNRDLSSSLEKLSSGLRINKAADDSSGMAIADSLRSQSANLGQAIRNANDAIGMVQTADKAMDEQIKILDTIKTKAVQAAQDGQTLESRRALQSDIQRLLEELDNIANTTSFNGQQMLSGSFSNKEFQIGAYSNTTVKASIGSTSSDKIGHVRMETSSFSGEGMLASAAAQNLTEVGLNFKQVNGVNDYKIETVRISTSAGTGIGALSEIINRFSNTLGVRASYNVMATGGTPVQSGTVRELTINGVEIGTVNDVHKNDADGRLTNAINSVKDRTGVEASLDIQGRINLHSIDGRAISVHAASASGQVFGGGNFAGISGTQHAVIGRLTLTRTDARDIIVSGVNFSHVGFHSAQGVAEYTVNLRAVRGIFDANVASAAGANANGAQAETNSQGIGAGVTSLKGAMIVMDMADSARTQLDKIRSDMGSVQMELVTTINNISVTQVNVKAAESQIRDVDFAEESANFSKYNILAQSGSFAMAQANAVQQNVLRLLQ.

This sequence belongs to the bacterial flagellin family. As to quaternary structure, heteromer of FlaA and FlaB. FlaB is located proximal to the hook while the remainder of the filament is composed of the predominant FlaA.

It localises to the secreted. The protein localises to the bacterial flagellum. Its function is as follows. Flagellin is the subunit protein which polymerizes to form the filaments of bacterial flagella. Important for motility and virulence. The protein is Flagellin B (flaB) of Helicobacter pylori (strain J99 / ATCC 700824) (Campylobacter pylori J99).